A 246-amino-acid polypeptide reads, in one-letter code: uncharacterized protein (246 aa).

A run of 6 helical transmembrane segments spans residues 7 to 27 (KVTL…ALII), 50 to 70 (LNIL…SMEF), 99 to 119 (VSFY…LLFF), 135 to 155 (LALI…GLLC), 163 to 183 (AVAV…VQLM), and 219 to 239 (FSIG…WWCF).

The protein localises to the cell membrane. This is an uncharacterized protein from Bacillus subtilis (strain 168).